A 154-amino-acid polypeptide reads, in one-letter code: Endoribonuclease YbeY (154 aa).

Residues His118, His122, and His128 each coordinate Zn(2+).

This sequence belongs to the endoribonuclease YbeY family. It depends on Zn(2+) as a cofactor.

The protein resides in the cytoplasm. Functionally, single strand-specific metallo-endoribonuclease involved in late-stage 70S ribosome quality control and in maturation of the 3' terminus of the 16S rRNA. The sequence is that of Endoribonuclease YbeY from Chloroflexus aurantiacus (strain ATCC 29366 / DSM 635 / J-10-fl).